The following is a 227-amino-acid chain: Cytochrome c oxidase subunit 2 (227 aa).

The Mitochondrial intermembrane portion of the chain corresponds to 1–14; sequence MAYPFQLGLQDATS. Residues 15 to 45 traverse the membrane as a helical segment; that stretch reads PIMEELLHFHDHTLMIVFLISSLVLYIISSM. Residues 46 to 59 are Mitochondrial matrix-facing; the sequence is LTTKLTHTSTMDAQ. Residues 60–87 form a helical membrane-spanning segment; sequence EVETVWTILPAIILVLIALPSLRILYMM. The Mitochondrial intermembrane segment spans residues 88 to 227; the sequence is DETNNPSLTV…YFETWSALMV (140 aa). 6 residues coordinate Cu cation: histidine 161, cysteine 196, glutamate 198, cysteine 200, histidine 204, and methionine 207. Glutamate 198 contacts Mg(2+). Phosphotyrosine is present on tyrosine 218.

This sequence belongs to the cytochrome c oxidase subunit 2 family. Component of the cytochrome c oxidase (complex IV, CIV), a multisubunit enzyme composed of 14 subunits. The complex is composed of a catalytic core of 3 subunits MT-CO1, MT-CO2 and MT-CO3, encoded in the mitochondrial DNA, and 11 supernumerary subunits COX4I, COX5A, COX5B, COX6A, COX6B, COX6C, COX7A, COX7B, COX7C, COX8 and NDUFA4, which are encoded in the nuclear genome. The complex exists as a monomer or a dimer and forms supercomplexes (SCs) in the inner mitochondrial membrane with NADH-ubiquinone oxidoreductase (complex I, CI) and ubiquinol-cytochrome c oxidoreductase (cytochrome b-c1 complex, complex III, CIII), resulting in different assemblies (supercomplex SCI(1)III(2)IV(1) and megacomplex MCI(2)III(2)IV(2)). Found in a complex with TMEM177, COA6, COX18, COX20, SCO1 and SCO2. Interacts with TMEM177 in a COX20-dependent manner. Interacts with COX20. Interacts with COX16. Cu cation is required as a cofactor.

Its subcellular location is the mitochondrion inner membrane. The catalysed reaction is 4 Fe(II)-[cytochrome c] + O2 + 8 H(+)(in) = 4 Fe(III)-[cytochrome c] + 2 H2O + 4 H(+)(out). In terms of biological role, component of the cytochrome c oxidase, the last enzyme in the mitochondrial electron transport chain which drives oxidative phosphorylation. The respiratory chain contains 3 multisubunit complexes succinate dehydrogenase (complex II, CII), ubiquinol-cytochrome c oxidoreductase (cytochrome b-c1 complex, complex III, CIII) and cytochrome c oxidase (complex IV, CIV), that cooperate to transfer electrons derived from NADH and succinate to molecular oxygen, creating an electrochemical gradient over the inner membrane that drives transmembrane transport and the ATP synthase. Cytochrome c oxidase is the component of the respiratory chain that catalyzes the reduction of oxygen to water. Electrons originating from reduced cytochrome c in the intermembrane space (IMS) are transferred via the dinuclear copper A center (CU(A)) of subunit 2 and heme A of subunit 1 to the active site in subunit 1, a binuclear center (BNC) formed by heme A3 and copper B (CU(B)). The BNC reduces molecular oxygen to 2 water molecules using 4 electrons from cytochrome c in the IMS and 4 protons from the mitochondrial matrix. In Chrysocyon brachyurus (Maned wolf), this protein is Cytochrome c oxidase subunit 2 (MT-CO2).